The following is a 441-amino-acid chain: Cysteine--tRNA ligase (441 aa).

Cysteine 24 serves as a coordination point for Zn(2+). The 'HIGH' region motif lies at 26–36 (PTVYNYIHIGN). Zn(2+) is bound by residues cysteine 204, histidine 230, and glutamate 234. The 'KMSKS' region motif lies at 262 to 266 (KMSKS). Lysine 265 contacts ATP.

The protein belongs to the class-I aminoacyl-tRNA synthetase family. As to quaternary structure, monomer. Requires Zn(2+) as cofactor.

The protein resides in the cytoplasm. It carries out the reaction tRNA(Cys) + L-cysteine + ATP = L-cysteinyl-tRNA(Cys) + AMP + diphosphate. The protein is Cysteine--tRNA ligase of Mycoplasma mycoides subsp. mycoides SC (strain CCUG 32753 / NCTC 10114 / PG1).